The sequence spans 157 residues: Succinate dehydrogenase assembly factor 2-A, mitochondrial (157 aa).

This sequence belongs to the SDHAF2 family. As to quaternary structure, interacts with the flavoprotein subunit within the SDH catalytic dimer.

The protein localises to the mitochondrion matrix. In terms of biological role, plays an essential role in the assembly of succinate dehydrogenase (SDH), an enzyme complex (also referred to as respiratory complex II) that is a component of both the tricarboxylic acid (TCA) cycle and the mitochondrial electron transport chain, and which couples the oxidation of succinate to fumarate with the reduction of ubiquinone (coenzyme Q) to ubiquinol. Required for flavinylation (covalent attachment of FAD) of the flavoprotein subunit of the SDH catalytic dimer. This chain is Succinate dehydrogenase assembly factor 2-A, mitochondrial, found in Drosophila willistoni (Fruit fly).